Reading from the N-terminus, the 336-residue chain is Ornithine carbamoyltransferase, catabolic (336 aa).

Residues 57–60, Gln-84, Arg-108, and 135–138 contribute to the carbamoyl phosphate site; these read STRT and HPTQ. L-ornithine-binding positions include Asn-168, Asp-232, and 236–237; that span reads SM. Carbamoyl phosphate is bound by residues 274–275 and Arg-321; that span reads CL.

Belongs to the aspartate/ornithine carbamoyltransferase superfamily. OTCase family.

It is found in the cytoplasm. It carries out the reaction carbamoyl phosphate + L-ornithine = L-citrulline + phosphate + H(+). Its pathway is amino-acid degradation; L-arginine degradation via ADI pathway; carbamoyl phosphate from L-arginine: step 2/2. In terms of biological role, reversibly catalyzes the transfer of the carbamoyl group from carbamoyl phosphate (CP) to the N(epsilon) atom of ornithine (ORN) to produce L-citrulline. The polypeptide is Ornithine carbamoyltransferase, catabolic (arcB) (Pseudomonas putida (strain ATCC 47054 / DSM 6125 / CFBP 8728 / NCIMB 11950 / KT2440)).